The sequence spans 274 residues: F-actin-capping protein subunit alpha (274 aa).

Belongs to the F-actin-capping protein alpha subunit family. Heterodimer of an alpha and a beta subunit.

It is found in the cytoplasm. Functionally, F-actin-capping proteins bind in a Ca(2+)-independent manner to the fast growing ends of actin filaments (barbed end) thereby blocking the exchange of subunits at these ends. Unlike other capping proteins (such as gelsolin and severin), these proteins do not sever actin filaments. In Chaetomium thermophilum (strain DSM 1495 / CBS 144.50 / IMI 039719) (Thermochaetoides thermophila), this protein is F-actin-capping protein subunit alpha.